The sequence spans 329 residues: Helicase VP6-A (329 aa).

Disordered stretches follow at residues 28 to 130 (NLVD…TNGG) and 189 to 232 (DLRR…SEEP). 3 stretches are compositionally biased toward basic and acidic residues: residues 36-58 (EGGK…KDGE), 65-83 (GQKE…DRRI), and 96-109 (SGER…RGDG). Position 110 (Lys110) interacts with ATP. A compositionally biased stretch (gly residues) spans 110 to 129 (KVGGGGGDADAGVGATGTNG). Basic and acidic residues-rich tracts occupy residues 189 to 207 (DLRR…ERGG) and 215 to 232 (HGDA…SEEP).

It belongs to the reoviruses VP6 family. As to quaternary structure, homohexamer.

It is found in the virion. It carries out the reaction ATP + H2O = ADP + phosphate + H(+). ATP dependent RNA helicase essential for RNA packaging and viral transcription. Possesses ss- and dsRNA-binding capacity. This chain is Helicase VP6-A (Segment-9), found in Bluetongue virus 10 (isolate USA) (BTV 10).